The chain runs to 539 residues: MKLLAVRRLFRIQRVVIRYRLDDLLFDLPLPWWLRSLRLLMPWRWLPRTPSELSRGARLRLALQDLGPIFIKFGQLLSTRRDLLPTDIADELMLLQDRVPPFDPKQAVALIESQLGAKVGEVFSRFDVEPLASASVAQVHAARLKTGEEVVVKVVRPGLKPVIAQDLAWLFLIAKGAERASADARRLHPVEIVGDYEKTIYDELDLLREAANASQLRRNFEGSELMYVPQVYWDLCRPKVLVMERIYGVPVTDMATLADQRTDMKLLAERGVEVFFTQVFRHSFFHADMHPGNIFVSTVKPWSPQYIAIDCGIVGSLTAEDQDYLARNLIAFFKRDYRRVAELHIDSGWVPAHTKVNEFEAAIRTVCEPIFEKPLKDISFGQVLMRLFQTARRFNMEVQPQLVLLQKTLLNIEGLGRQLYPDLDLWSTAKPFLERWMRERYSPKAMFGNLYSQAEQLPHLAGMTRDLLERLSQPHLHDPQLPERRRQGDRWALRLLGAGLLGGGAVLAASAAEAASLAAPAAWPAWLMLAAGLYLIVRQ.

A Protein kinase domain is found at 125–493; it reads RFDVEPLASA…RRRQGDRWAL (369 aa). ATP-binding positions include 131–139 and lysine 153; that span reads LASASVAQV. Aspartate 288 (proton acceptor) is an active-site residue. Transmembrane regions (helical) follow at residues 495–515 and 517–537; these read LLGAGLLGGGAVLAASAAEAA and LAAPAAWPAWLMLAAGLYLIV.

The protein belongs to the ABC1 family. UbiB subfamily.

Its subcellular location is the cell inner membrane. Its pathway is cofactor biosynthesis; ubiquinone biosynthesis [regulation]. Functionally, is probably a protein kinase regulator of UbiI activity which is involved in aerobic coenzyme Q (ubiquinone) biosynthesis. This is Probable protein kinase UbiB from Pseudomonas putida (strain W619).